The chain runs to 44 residues: Pandinin-1 (44 aa).

As to expression, expressed by the venom gland.

It is found in the secreted. It localises to the target cell membrane. Its function is as follows. Disrupts cell membranes through formation of pores. Strong antimicrobial activity against Gram-positive bacteria B.subtilis, S.epidermidis, E.faecalis and S.aureus. Less active against Gram-negative bacteria P.aeruginosa and E.coli. Has no antifungal or hemolytic activity. The protein is Pandinin-1 of Pandinus imperator (Emperor scorpion).